The chain runs to 180 residues: Large ribosomal subunit protein uL6 (180 aa).

It belongs to the universal ribosomal protein uL6 family. Part of the 50S ribosomal subunit.

Functionally, this protein binds to the 23S rRNA, and is important in its secondary structure. It is located near the subunit interface in the base of the L7/L12 stalk, and near the tRNA binding site of the peptidyltransferase center. The chain is Large ribosomal subunit protein uL6 from Thermoanaerobacter sp. (strain X514).